Consider the following 332-residue polypeptide: MKSNLENFNFQTSIREQVVPSRKKVILPAWLEVAKPRLIPLLLATTLGGMALTEEWPLSSPKLICTLGGGALAAAAAGALNCLWEMDLDKRMKRTSNRALPSGKLSFNTVFLGAVSCTFAAAMLLISGVNYLAAGLTLLGLCSYVILYTIILKPRTTQNIVFGGVAGAIPPLVGASAATGHVGLSGWWLFGLVMLWTPAHFWALAILLKDDYASVGIPMLPSVKGSAFTVKAISRYGWATVFMSILGVFALPEGGLLYVIMLLPFNGRLLQLINRLKSSPDDLEKAKGLFRWSILYMFGICLLLLISRTQLSVDFEQQSMQIFLSLKAYFNI.

7 consecutive transmembrane segments (helical) span residues 63–83 (LICTLGGGALAAAAAGALNCL), 109–129 (TVFLGAVSCTFAAAMLLISGV), 132–152 (LAAGLTLLGLCSYVILYTIIL), 160–180 (IVFGGVAGAIPPLVGASAATG), 188–208 (WLFGLVMLWTPAHFWALAILL), 245–265 (ILGVFALPEGGLLYVIMLLPF), and 286–306 (AKGLFRWSILYMFGICLLLLI).

Belongs to the UbiA prenyltransferase family. Protoheme IX farnesyltransferase subfamily.

The protein localises to the cell inner membrane. The enzyme catalyses heme b + (2E,6E)-farnesyl diphosphate + H2O = Fe(II)-heme o + diphosphate. It functions in the pathway porphyrin-containing compound metabolism; heme O biosynthesis; heme O from protoheme: step 1/1. Its function is as follows. Converts heme B (protoheme IX) to heme O by substitution of the vinyl group on carbon 2 of heme B porphyrin ring with a hydroxyethyl farnesyl side group. The protein is Protoheme IX farnesyltransferase of Prochlorococcus marinus (strain MIT 9515).